Reading from the N-terminus, the 402-residue chain is Arabinosyltransferase RRA1 (402 aa).

Topologically, residues 1–13 (MAVRKEKVQPFRE) are cytoplasmic. Residues 14 to 34 (CGIAIAVLVGIFIGCVCTILI) form a helical; Signal-anchor for type II membrane protein membrane-spanning segment. Residues 35-402 (PNDFVNFRSS…DALDRFRDGS (368 aa)) are Lumenal-facing. The short motif at 225 to 227 (DVD) is the DXD motif element. A glycan (N-linked (GlcNAc...) asparagine) is linked at Asn253.

This sequence belongs to the glycosyltransferase 77 family. In terms of tissue distribution, expressed in leaf meristem and at points of cauline leaf attachments on the primary stem. Expressed at low levels in siliques.

It localises to the golgi apparatus membrane. Its function is as follows. Plays a role in the arabinosylation of cell wall components. Involved in the arabinosylation of extensin proteins in root hair cells. Extensins are structural glycoproteins present in cell walls and its arabinosylation is important for root hair cell development. This chain is Arabinosyltransferase RRA1, found in Arabidopsis thaliana (Mouse-ear cress).